Reading from the N-terminus, the 948-residue chain is Valine--tRNA ligase (948 aa).

Residues 40–50 carry the 'HIGH' region motif; the sequence is PNVTGSLHMGH. The short motif at 551 to 555 is the 'KMSKS' region element; the sequence is KMSKS. K554 serves as a coordination point for ATP. The stretch at 879–945 forms a coiled coil; it reads LIDKGAELAR…GKLAEQHARI (67 aa).

The protein belongs to the class-I aminoacyl-tRNA synthetase family. ValS type 1 subfamily. In terms of assembly, monomer.

Its subcellular location is the cytoplasm. It catalyses the reaction tRNA(Val) + L-valine + ATP = L-valyl-tRNA(Val) + AMP + diphosphate. Functionally, catalyzes the attachment of valine to tRNA(Val). As ValRS can inadvertently accommodate and process structurally similar amino acids such as threonine, to avoid such errors, it has a 'posttransfer' editing activity that hydrolyzes mischarged Thr-tRNA(Val) in a tRNA-dependent manner. This is Valine--tRNA ligase from Pseudomonas savastanoi pv. phaseolicola (strain 1448A / Race 6) (Pseudomonas syringae pv. phaseolicola (strain 1448A / Race 6)).